A 340-amino-acid chain; its full sequence is N-acetyl-gamma-glutamyl-phosphate reductase (340 aa).

Residue Cys149 is part of the active site.

The protein belongs to the NAGSA dehydrogenase family. Type 1 subfamily.

The protein localises to the cytoplasm. It carries out the reaction N-acetyl-L-glutamate 5-semialdehyde + phosphate + NADP(+) = N-acetyl-L-glutamyl 5-phosphate + NADPH + H(+). Its pathway is amino-acid biosynthesis; L-arginine biosynthesis; N(2)-acetyl-L-ornithine from L-glutamate: step 3/4. In terms of biological role, catalyzes the NADPH-dependent reduction of N-acetyl-5-glutamyl phosphate to yield N-acetyl-L-glutamate 5-semialdehyde. In Ruthia magnifica subsp. Calyptogena magnifica, this protein is N-acetyl-gamma-glutamyl-phosphate reductase.